The chain runs to 523 residues: Polypyrimidine tract-binding protein 3 (523 aa).

The tract at residues 1–25 (MNSSTSAGVYANGNDNKKFKGDRPP) is disordered. RRM domains lie at 30–114 (RVLH…NLPN), 153–229 (LRII…FSKL), and 329–403 (SVLL…LSKH). Residue Lys36 forms a Glycyl lysine isopeptide (Lys-Gly) (interchain with G-Cter in SUMO2) linkage. Tyr98 carries the post-translational modification Phosphotyrosine. Thr109 is subject to Phosphothreonine. A Glycyl lysine isopeptide (Lys-Gly) (interchain with G-Cter in SUMO2) cross-link involves residue Lys187. Lys394 bears the N6-acetyllysine mark. The interval 406 to 426 (VQLPREGQEDQGLTKDFSNSP) is disordered. Residue Ser425 is modified to Phosphoserine. The region spanning 446 to 521 (ATLHLSNIPP…HHLRVSFSKS (76 aa)) is the RRM 4 domain.

As to quaternary structure, interacts with THBS4 (via the acidic amphipathic C-terminus).

In terms of biological role, RNA-binding protein that mediates pre-mRNA alternative splicing regulation. Plays a role in the regulation of cell proliferation, differentiation and migration. Positive regulator of EPO-dependent erythropoiesis. Participates in cell differentiation regulation by repressing tissue-specific exons. Promotes Fas exon 6 skipping. Binds RNA, preferentially to both poly(G) and poly(U). The polypeptide is Polypyrimidine tract-binding protein 3 (Ptbp3) (Mus musculus (Mouse)).